The sequence spans 158 residues: NAD(P)H-quinone oxidoreductase subunit J, chloroplastic (158 aa).

Belongs to the complex I 30 kDa subunit family. In terms of assembly, NDH is composed of at least 16 different subunits, 5 of which are encoded in the nucleus.

It is found in the plastid. It localises to the chloroplast thylakoid membrane. The enzyme catalyses a plastoquinone + NADH + (n+1) H(+)(in) = a plastoquinol + NAD(+) + n H(+)(out). It catalyses the reaction a plastoquinone + NADPH + (n+1) H(+)(in) = a plastoquinol + NADP(+) + n H(+)(out). Functionally, NDH shuttles electrons from NAD(P)H:plastoquinone, via FMN and iron-sulfur (Fe-S) centers, to quinones in the photosynthetic chain and possibly in a chloroplast respiratory chain. The immediate electron acceptor for the enzyme in this species is believed to be plastoquinone. Couples the redox reaction to proton translocation, and thus conserves the redox energy in a proton gradient. The protein is NAD(P)H-quinone oxidoreductase subunit J, chloroplastic of Lactuca sativa (Garden lettuce).